The following is a 427-amino-acid chain: MEMERVHEFPHTHMDRRPRKRARLGWDVLPQATKAQVGMFCGQEIGNISSFASSGAPSDNSSSLCVKGVARNGSPPWREDDKDGHYIFELGDDLTPRYKIYSKMGEGTFGQVLECWDRERKEMVAVKIVRGVKKYREAAMIEIEMLQQLGKHDKGGNRCVQIRNWFDYRNHICIVFEKLGSSLYDFLRKNNYRSFPIDLVREIGWQLLECVAFMHDLRMIHTDLKPENILLVSSDYVKIPEYKGSRLQRDVCYKRVPKSSAIKVIDFGSTTYERQDQTYIVSTRHYRAPEVILGLGWSYPCDVWSVGCIIVELCTGEALFQTHENLEHLAMMERVLGPFPQQMLKKVDRHSEKYVRRGRLDWPDGATSRDSLKAVLKLPRLQNLIMQHVDHSAGELINMVQGLLRFDPSERITAREALRHPFFARRR.

A Protein kinase domain is found at 98–423; the sequence is YKIYSKMGEG…AREALRHPFF (326 aa). Residues 104–112 and K127 each bind ATP; that span reads MGEGTFGQV. D223 (proton acceptor) is an active-site residue.

This sequence belongs to the protein kinase superfamily. CMGC Ser/Thr protein kinase family. Lammer subfamily.

The catalysed reaction is L-seryl-[protein] + ATP = O-phospho-L-seryl-[protein] + ADP + H(+). It carries out the reaction L-threonyl-[protein] + ATP = O-phospho-L-threonyl-[protein] + ADP + H(+). It catalyses the reaction L-tyrosyl-[protein] + ATP = O-phospho-L-tyrosyl-[protein] + ADP + H(+). The polypeptide is Serine/threonine-protein kinase AFC2 (AFC2) (Arabidopsis thaliana (Mouse-ear cress)).